The following is a 127-amino-acid chain: Putative B3 domain-containing protein At4g12617 (127 aa).

Positions 35–127 form a DNA-binding region, TF-B3; that stretch reads IMMPKTLLEA…HTRLNFKHVA (93 aa).

It is found in the nucleus. The chain is Putative B3 domain-containing protein At4g12617 from Arabidopsis thaliana (Mouse-ear cress).